The following is a 495-amino-acid chain: UDP-glycosyltransferase 73C5 (495 aa).

A helical membrane pass occupies residues 146 to 162; the sequence is ILFHGMGCFCLLCMHVL. UDP-alpha-D-glucose contacts are provided by residues Ser296, 356 to 358, 373 to 381, and 395 to 398; these read SPQ, HCGWNSTLE, and FADQ. The segment at 446-477 is disordered; the sequence is MGESDDAKERRRRAKELGDSAHKAVEEGGSSH. Basic and acidic residues predominate over residues 450–471; that stretch reads DDAKERRRRAKELGDSAHKAVE.

The protein belongs to the UDP-glycosyltransferase family. As to expression, elongating hypocotyls and root-specific. Expressed in the vascular system, in meristematic tissues of the root tip, and in the vasculature of the hypocotyl right after germination. In late stage of flower development, expressed in petals, and in abscission zones.

The protein resides in the membrane. Specifically catalyzes 23-O-glucosylation of brassinosteroids, resulting probably in their inactivation. Also, involved in the O-glucosylation of trans-zeatin and dihydrozeatin. Active in vitro on cis-zeatin, dihydrozeatin-9-N-Glc, and olomoucine. Also involved in the detoxification of the Fusarium mycotoxin deoxynivalenol by the transfer of glucose from UDP-glucose to the hydroxyl group at C-3. Possesses low quercetin 7-O-glucosyltransferase and 4'-O-glucosyltransferase activities in vitro. The chain is UDP-glycosyltransferase 73C5 (UGT73C5) from Arabidopsis thaliana (Mouse-ear cress).